A 72-amino-acid chain; its full sequence is NADH dehydrogenase [ubiquinone] 1 beta subcomplex subunit 3-A (72 aa).

A helical transmembrane segment spans residues 31 to 48 (ALPGIGIGVGAFCVYLVG).

This sequence belongs to the complex I NDUFB3 subunit family. As to quaternary structure, complex I is composed of at least 49 different subunits.

The protein resides in the mitochondrion inner membrane. In terms of biological role, accessory subunit of the mitochondrial membrane respiratory chain NADH dehydrogenase (Complex I), that is believed not to be involved in catalysis. Complex I functions in the transfer of electrons from NADH to the respiratory chain. The immediate electron acceptor for the enzyme is believed to be ubiquinone. This chain is NADH dehydrogenase [ubiquinone] 1 beta subcomplex subunit 3-A, found in Arabidopsis thaliana (Mouse-ear cress).